The primary structure comprises 484 residues: Legumin type B (484 aa).

Positions 1 to 22 (MSKPFLSLLSLSLLLFTSTCLA) are cleaved as a signal peptide. 2 cysteine pairs are disulfide-bonded: Cys33–Cys66 and Cys109–Cys310. Residues 38–257 (INALEPDHRV…TFNTEEDTAK (220 aa)) enclose the Cupin type-1 1 domain. 3 disordered regions span residues 109-141 (CPQTYQEPRSSQSRQGSRQQQPDSHQKIRRFRK), 196-236 (PETQ…GNSV), and 275-304 (GLRIINPEGQQEEEEEEEEEKQRSEQGRNG). Low complexity predominate over residues 117-129 (RSSQSRQGSRQQQ). A compositionally biased stretch (acidic residues) spans 284–293 (QQEEEEEEEE). The Cupin type-1 2 domain occupies 316–463 (ENIAQPARAD…AFGLRQRQVT (148 aa)).

This sequence belongs to the 11S seed storage protein (globulins) family. As to quaternary structure, hexamer; each subunit is composed of an acidic and a basic chain derived from a single precursor and linked by a disulfide bond.

Functionally, this protein found in the seeds of many leguminous and non-leguminous plants is the source of sulfur-containing amino acids in seed meals. The polypeptide is Legumin type B (LEB4) (Vicia faba (Broad bean)).